Here is a 46-residue protein sequence, read N- to C-terminus: Mu-segestritoxin-Sf1f (46 aa).

Cystine bridges form between Cys-3/Cys-19, Cys-10/Cys-22, Cys-18/Cys-42, and Cys-24/Cys-40. The segment at 31–33 (RPW) is keys region for toxin activity.

This sequence belongs to the neurotoxin 16 (SFI) family. In terms of tissue distribution, expressed by the venom gland.

It is found in the secreted. Its function is as follows. Insecticidal toxin. It inhibits insect voltage-gated sodium channels (Nav) by partially blocking the channel pore in DUM neurons from the American cockroach, not by acting as a gating modifier. The inhibition is only partially reversible after prolonged washout. In vivo, the toxin causes flaccid paralysis followed by death when injected into Heliothis virescens larvae. It also causes uncoordinated movements followed by full paralysis to sheep blowflies (Lucilia cuprina). When the toxin is fused to snowdrop lectin, it is orally active against larvae of the tomato moth (Laconobia oleracea), the rice brown planthopper (Nilaparvata lugens), and the peach-potato aphid (Myzus persicae). The chain is Mu-segestritoxin-Sf1f from Segestria florentina (Tube-web spider).